Reading from the N-terminus, the 304-residue chain is Non-specific ribonucleoside hydrolase RihC (304 aa).

Residue His-233 is part of the active site.

Belongs to the IUNH family. RihC subfamily.

Functionally, hydrolyzes both purine and pyrimidine ribonucleosides with a broad-substrate specificity. In Shigella flexneri serotype 5b (strain 8401), this protein is Non-specific ribonucleoside hydrolase RihC.